The chain runs to 292 residues: Oxidative stress-responsive serine-rich protein 1 (292 aa).

The disordered stretch occupies residues 27–175 (SIASLSVGEG…SSDATQVSQA (149 aa)). Basic residues predominate over residues 65 to 83 (STRKSSRGVVRTQRRRRSK). 2 positions are modified to phosphothreonine: Thr143 and Thr233.

The polypeptide is Oxidative stress-responsive serine-rich protein 1 (OSER1) (Pongo abelii (Sumatran orangutan)).